Here is a 160-residue protein sequence, read N- to C-terminus: Cytochrome b6-f complex subunit 4 (160 aa).

Transmembrane regions (helical) follow at residues 36 to 56 (LLYTFPVVILGTLACVVGLAV), 95 to 115 (LLGILLQTAIPLGLMLVPFIE), and 127 to 147 (PIAMAVFLFGTLVTLWMGVAA).

This sequence belongs to the cytochrome b family. PetD subfamily. As to quaternary structure, the 4 large subunits of the cytochrome b6-f complex are cytochrome b6, subunit IV (17 kDa polypeptide, PetD), cytochrome f and the Rieske protein, while the 4 small subunits are PetG, PetL, PetM and PetN. The complex functions as a dimer.

The protein localises to the cellular thylakoid membrane. Its function is as follows. Component of the cytochrome b6-f complex, which mediates electron transfer between photosystem II (PSII) and photosystem I (PSI), cyclic electron flow around PSI, and state transitions. The chain is Cytochrome b6-f complex subunit 4 from Prochlorothrix hollandica.